We begin with the raw amino-acid sequence, 228 residues long: RNA-free ribonuclease P (228 aa).

The protein belongs to the HARP family.

The enzyme catalyses Endonucleolytic cleavage of RNA, removing 5'-extranucleotides from tRNA precursor.. RNA-free RNase P that catalyzes the removal of the 5'-leader sequence from pre-tRNA to produce the mature 5'-terminus. In Methanopyrus kandleri (strain AV19 / DSM 6324 / JCM 9639 / NBRC 100938), this protein is RNA-free ribonuclease P.